Reading from the N-terminus, the 181-residue chain is Putative NAD(P)H-dependent FMN-containing oxidoreductase YwqN (181 aa).

This sequence belongs to the SsuE family. Requires FMN as cofactor.

In terms of biological role, putative NADPH-dependent oxidoreductase. The chain is Putative NAD(P)H-dependent FMN-containing oxidoreductase YwqN (ywqN) from Bacillus subtilis (strain 168).